The primary structure comprises 241 residues: Aquaporin Z 1 (241 aa).

A helical transmembrane segment spans residues 23 to 43 (AVFAAAFPELGIGFLGVAFAF). Positions 63 to 65 (NPA) match the NPA 1 motif. A run of 3 helical transmembrane segments spans residues 85-105 (IVAQVLGAVVAAAALYVILTG), 129-149 (LLSALLIEIILTAFFLVVILG), and 156-176 (PVGFAPVAIGLALTLIHLISI). Residues 184–186 (NPA) carry the NPA 2 motif. A helical transmembrane segment spans residues 204 to 224 (WLFWLAPILGGAIGAVVWKIF).

This sequence belongs to the MIP/aquaporin (TC 1.A.8) family. In terms of assembly, homotetramer.

It is found in the cell inner membrane. It catalyses the reaction H2O(in) = H2O(out). Channel that permits osmotically driven movement of water in both directions. It is involved in the osmoregulation and in the maintenance of cell turgor during volume expansion in rapidly growing cells. It mediates rapid entry or exit of water in response to abrupt changes in osmolarity. In Agrobacterium fabrum (strain C58 / ATCC 33970) (Agrobacterium tumefaciens (strain C58)), this protein is Aquaporin Z 1.